The primary structure comprises 125 residues: Small ribosomal subunit protein uS12 (125 aa).

3-methylthioaspartic acid is present on aspartate 89.

It belongs to the universal ribosomal protein uS12 family. As to quaternary structure, part of the 30S ribosomal subunit. Contacts proteins S8 and S17. May interact with IF1 in the 30S initiation complex.

In terms of biological role, with S4 and S5 plays an important role in translational accuracy. Functionally, interacts with and stabilizes bases of the 16S rRNA that are involved in tRNA selection in the A site and with the mRNA backbone. Located at the interface of the 30S and 50S subunits, it traverses the body of the 30S subunit contacting proteins on the other side and probably holding the rRNA structure together. The combined cluster of proteins S8, S12 and S17 appears to hold together the shoulder and platform of the 30S subunit. This Cupriavidus necator (strain ATCC 17699 / DSM 428 / KCTC 22496 / NCIMB 10442 / H16 / Stanier 337) (Ralstonia eutropha) protein is Small ribosomal subunit protein uS12.